The primary structure comprises 453 residues: Nuclear hormone receptor family member nhr-12 (453 aa).

The interval 1 to 37 (MEQIPQEQKTEPFLASFTTTEKLGTETPTTSITPNTQ) is disordered. Over residues 18–36 (TTTEKLGTETPTTSITPNT) the composition is skewed to low complexity. A DNA-binding region (nuclear receptor) is located at residues 44-119 (KPNCAVCNEV…VGMNPECVQN (76 aa)). 2 consecutive NR C4-type zinc fingers follow at residues 47 to 67 (CAVCNEVGDGLHFGAEACRAC) and 83 to 107 (CRAGRNCEVSSNIRCMCRSCRYDKC). An NR LBD domain is found at 178 to 451 (FSPASLPGLS…ENFVNIINGK (274 aa)).

Belongs to the nuclear hormone receptor family.

The protein resides in the nucleus. Orphan nuclear receptor. The polypeptide is Nuclear hormone receptor family member nhr-12 (nhr-12) (Caenorhabditis elegans).